A 708-amino-acid chain; its full sequence is MKLFVPALLSLGALGLCLAAPRKNVRWCTISQPEWLKCHRWQWRMKKLGAPSITCVRRAFVLECIRAITEKKADAVTLDGGMVFEAGLDPYKLRPVAAEIYGTKESPQTHYYAVAVVKKGSNFQLDQLQGRNSCHTGLGRSAGWNIPMGILRPYLSWTESLEPFQGAVAKFFSASCVPCVDRQAYPNLCQLCKGEGENQCACSPREPYFGYSGAFKCLQDGAGDVAFVKETTVFENLPEKADRDQYELLCLNNTRAPVDAFKECHLAQVPSHAVVARSVDGKEDLIWKLLSKAQEKFGKNKSGSFQLFGSPPGQRDLLFKDCALGFLRIPSKVDSALYLGSRYLTALKNLRETAEEVQARRARVVWCAVGPEEQKKCQQWSQQSGQIVTCATASTTDDCIALVLKGEADALSLDGGYIYTAGKCGLVPVLAENRKSSKHSSLDCVLRPTEGYLAVAVVKKANEGLTWNSLKGKKSCHTAVDRTAGWNIPMGLIANQTGSCAFDEFFSQSCAPGADPKSRLCALCAGDDQGLDKCVPNSKEKYYGYTGAFRCLAEDVGDVAFVKNDTVWENTNGESTADWAKNLNREDFRLLCLDGTRKPVTEAQSCHLAVAPNHAVVSLSERAAHVEQVLLHQQALFGENGKNCPDKFCLFKSETKNLLFNDNTECLAKLGGRPTYEEYLGTEYVTAIANLKKCSTSPLLEACAFLTR.

The signal sequence occupies residues 1–19; that stretch reads MKLFVPALLSLGALGLCLA. 2 consecutive Transferrin-like domains span residues 25-352 and 364-693; these read VRWC…NLRE and VVWC…NLKK. 2 cysteine pairs are disulfide-bonded: C28/C64 and C38/C55. D79 provides a ligand contact to Fe cation. K92 is a catalytic residue. Y111 is a binding site for Fe cation. 5 cysteine pairs are disulfide-bonded: C134–C217, C176–C192, C179–C202, C189–C200, and C250–C264. T136, R140, A142, and G143 together coordinate hydrogencarbonate. Y211 contributes to the Fe cation binding site. N252 carries an N-linked (GlcNAc...) (high mannose) asparagine glycan. H272 is a Fe cation binding site. S278 acts as the Nucleophile in catalysis. N300 is a glycosylation site (N-linked (GlcNAc...) (hybrid) asparagine). Intrachain disulfides connect C367–C399 and C377–C390. Positions 414 and 452 each coordinate Fe cation. Intrachain disulfides connect C424–C703, C444–C666, C476–C551, C500–C694, C510–C524, C521–C534, C592–C606, and C644–C649. T478, R482, A484, and G485 together coordinate hydrogencarbonate. N495 carries an N-linked (GlcNAc...) (complex) asparagine; alternate glycan. The N-linked (GlcNAc...) (high mannose) asparagine; alternate glycan is linked to N495. Residue N495 is glycosylated (N-linked (GlcNAc...) (hybrid) asparagine; alternate). Residue Y545 coordinates Fe cation. An N-linked (GlcNAc...) (high mannose) asparagine glycan is attached at N564. Residue H614 participates in Fe cation binding.

It belongs to the transferrin family. Monomer. Found in a complex with LTF, CLU, EPPIN and SEMG1. Found in a complex with MPO and LTF; interacts directly with CP, allows Fe(3+) incorporation into LTF and activation of CP ferroxidase activity. In terms of processing, poly-N-acetyllactosaminic carbohydrate moiety seems to be needed for TLR4 activation.

Its subcellular location is the secreted. The protein localises to the cytoplasmic granule. Its function is as follows. Transferrins are iron binding transport proteins which can bind two Fe(3+) ions in association with the binding of an anion, usually bicarbonate. Functionally, major iron-binding and multifunctional protein found in exocrine fluids such as breast milk and mucosal secretions. Has antimicrobial activity, which depends on the extracellular cation concentration. Antimicrobial properties include bacteriostasis, which is related to its ability to sequester free iron and thus inhibit microbial growth, as well as direct bactericidal properties leading to the release of lipopolysaccharides from the bacterial outer membrane. Can also prevent bacterial biofilm development in P.aeruginosa infection. Has weak antifungal activity against C.albicans. Has anabolic, differentiating and anti-apoptotic effects on osteoblasts and can also inhibit osteoclastogenesis, possibly playing a role in the regulation of bone growth. Promotes binding of species C adenoviruses to epithelial cells, promoting adenovirus infection. Can inhibit papillomavirus infections. Stimulates the TLR4 signaling pathway leading to NF-kappa-B activation and subsequent pro-inflammatory cytokine production while also interfering with the lipopolysaccharide (LPS)-stimulated TLR4 signaling. Inhibits neutrophil granulocyte migration to sites of apoptosis, when secreted by apoptotic cells. Stimulates VEGFA-mediated endothelial cell migration and proliferation. Binds heparin, chondroitin sulfate and possibly other glycosaminoglycans (GAGs). Also binds specifically to pneumococcal surface protein A (PspA), the lipid A portion of bacterial lipopolysaccharide (LPS), lysozyme and DNA. Lactoferricin binds to the bacterial surface and is crucial for the bactericidal functions. Has some antiviral activity against papillomavirus infection. N-terminal region shows strong antifungal activity against C.albicans. Contains two BBXB heparin-binding consensus sequences that appear to form the predominate functional GAG-binding site. In terms of biological role, the lactotransferrin transferrin-like domain 1 functions as a serine protease of the peptidase S60 family that cuts arginine rich regions. This function contributes to the antimicrobial activity. Shows a preferential cleavage at -Arg-Ser-Arg-Arg-|- and -Arg-Arg-Ser-Arg-|-, and of Z-Phe-Arg-|-aminomethylcoumarin sites. The protein is Lactotransferrin (LTF) of Bubalus bubalis (Domestic water buffalo).